The primary structure comprises 370 residues: Putative glutamate--cysteine ligase 2 (370 aa).

Belongs to the glutamate--cysteine ligase type 2 family. YbdK subfamily.

It carries out the reaction L-cysteine + L-glutamate + ATP = gamma-L-glutamyl-L-cysteine + ADP + phosphate + H(+). ATP-dependent carboxylate-amine ligase which exhibits weak glutamate--cysteine ligase activity. In Herminiimonas arsenicoxydans, this protein is Putative glutamate--cysteine ligase 2.